The following is a 205-amino-acid chain: Ephrin-A1 (205 aa).

The first 18 residues, 1–18, serve as a signal peptide directing secretion; that stretch reads MEFLWAPLLGLCCSLAAA. One can recognise an Ephrin RBD domain in the interval 19–151; sequence DRHTVFWNSS…RLKVTVSGKI (133 aa). Residue Asn-26 is glycosylated (N-linked (GlcNAc...) asparagine). 2 disulfides stabilise this stretch: Cys-51-Cys-92 and Cys-80-Cys-140. A lipid anchor (GPI-anchor amidated serine) is attached at Ser-182. A propeptide spans 183–205 (removed in mature form); the sequence is AAPRLFPLAWTVLLLPLLLLQTP.

The protein belongs to the ephrin family. As to quaternary structure, monomer. Homodimer. Forms heterodimers with EPHA2. Binds to the receptor tyrosine kinases EPHA2, EPHA3, EPHA4, EPHA5, EPHA6 and EPHA7. Also binds with low affinity to EPHA1. In terms of processing, undergoes proteolysis by a metalloprotease to give rise to a soluble monomeric form. N-Glycosylation is required for binding to EPHA2 receptor and inducing its internalization. Brain. Down-regulated in primary glioma tissues compared to the normal tissues. The soluble monomeric form is expressed in the glioblastoma multiforme (GBM) and breast cancer cells (at protein level).

It localises to the cell membrane. The protein localises to the secreted. Cell surface GPI-bound ligand for Eph receptors, a family of receptor tyrosine kinases which are crucial for migration, repulsion and adhesion during neuronal, vascular and epithelial development. Binds promiscuously Eph receptors residing on adjacent cells, leading to contact-dependent bidirectional signaling into neighboring cells. Plays an important role in angiogenesis and tumor neovascularization. The recruitment of VAV2, VAV3 and PI3-kinase p85 subunit by phosphorylated EPHA2 is critical for EFNA1-induced RAC1 GTPase activation and vascular endothelial cell migration and assembly. Exerts anti-oncogenic effects in tumor cells through activation and down-regulation of EPHA2. Activates EPHA2 by inducing tyrosine phosphorylation which leads to its internalization and degradation. Acts as a negative regulator in the tumorigenesis of gliomas by down-regulating EPHA2 and FAK. Can evoke collapse of embryonic neuronal growth cone and regulates dendritic spine morphogenesis. This is Ephrin-A1 (EFNA1) from Homo sapiens (Human).